The primary structure comprises 157 residues: Histone H2B.3 (157 aa).

The segment at methionine 1–valine 64 is disordered. Positions lysine 26–lysine 42 are enriched in basic residues. Residue lysine 153 forms a Glycyl lysine isopeptide (Lys-Gly) (interchain with G-Cter in ubiquitin) linkage.

This sequence belongs to the histone H2B family. In terms of assembly, the nucleosome is a histone octamer containing two molecules each of H2A, H2B, H3 and H4 assembled in one H3-H4 heterotetramer and two H2A-H2B heterodimers. The octamer wraps approximately 147 bp of DNA. In terms of processing, monoubiquitinated to form H2BK143ub1; may give a specific tag for epigenetic transcriptional activation.

Its subcellular location is the nucleus. The protein resides in the chromosome. Core component of nucleosome. Nucleosomes wrap and compact DNA into chromatin, limiting DNA accessibility to the cellular machineries which require DNA as a template. Histones thereby play a central role in transcription regulation, DNA repair, DNA replication and chromosomal stability. DNA accessibility is regulated via a complex set of post-translational modifications of histones, also called histone code, and nucleosome remodeling. In Volvox carteri (Green alga), this protein is Histone H2B.3.